The primary structure comprises 358 residues: Popeye domain-containing protein 1 (358 aa).

Over 1–48 the chain is Extracellular; that stretch reads MNSTESIPLAQSTVAGFTSELESLTPVPSNETTCENWREIHHLVFHVA. 2 N-linked (GlcNAc...) asparagine glycosylation sites follow: Asn-2 and Asn-30. Residues 49-69 form a helical membrane-spanning segment; the sequence is NVCFAVGLLIPTTLHLHMILL. A topological domain (cytoplasmic) is located at residue Arg-70. A helical membrane pass occupies residues 71–91; it reads VMLSLGCTLYVVWATLYRCAL. Position 92 (Asp-92) is a topological domain, extracellular. A helical membrane pass occupies residues 93–113; the sequence is VMIWNSVFLGINILHLSYLLY. The interval 93-115 is required for interaction with CAV3; sequence VMIWNSVFLGINILHLSYLLYKK. At 114-358 the chain is on the cytoplasmic side; that stretch reads KKRPVKIEKE…PDALKVHQLP (245 aa). The required for interaction with KCNK2 stretch occupies residues 136-186; it reads RVPPDLFRRLTGQFCMIQTLKRGQVYATEDKTSVDDRLSILLKGRMKVSYR. Ser-295 and Ser-318 each carry phosphoserine. Over residues 313–323 the composition is skewed to low complexity; sequence SSSTASLPMSS. A disordered region spans residues 313–350; the sequence is SSSTASLPMSSPQQRASAKMKPIEEGVEDDDEVFVSPD.

It belongs to the popeye family. As to quaternary structure, homodimer. Homodimerization requires the C-terminus cytoplasmic region. Interacts (via the C-terminus cytoplasmic tail) with TJP1. Interacts (via the C-terminus cytoplasmic tail) with ARHGEF25/GEFT (via the DH domain). Interacts (via the C-terminus cytoplasmic tail) with VAMP3. Interacts with KCNK2; the interaction enhances KCNK2 surface expression and is inhibited by cAMP. Interacts with CAV3. Expressed in epithelial cells, skeletal muscle, heart and intestinal smooth muscle (at protein level). Expressed in fetal and adult heart and skeletal muscle.

It is found in the lateral cell membrane. Its subcellular location is the cell junction. It localises to the tight junction. The protein localises to the membrane. The protein resides in the cell membrane. It is found in the sarcolemma. Its subcellular location is the caveola. In terms of biological role, cell adhesion molecule involved in the establishment and/or maintenance of cell integrity. Involved in the formation and regulation of the tight junction (TJ) paracellular permeability barrier in epithelial cells. Plays a role in VAMP3-mediated vesicular transport and recycling of different receptor molecules through its interaction with VAMP3. Plays a role in the regulation of cell shape and movement by modulating the Rho-family GTPase activity through its interaction with ARHGEF25/GEFT. Induces primordial adhesive contact and aggregation of epithelial cells in a Ca(2+)-independent manner. Also involved in striated muscle regeneration and repair and in the regulation of cell spreading. Important for the maintenance of cardiac function. Plays a regulatory function in heart rate dynamics mediated, at least in part, through cAMP-binding and, probably, by increasing cell surface expression of the potassium channel KCNK2 and enhancing current density. Is a caveolae-associated protein important for the preservation of caveolae structural and functional integrity as well as for heart protection against ischemia injury. This chain is Popeye domain-containing protein 1, found in Mus musculus (Mouse).